An 80-amino-acid chain; its full sequence is Exodeoxyribonuclease 7 small subunit (80 aa).

This sequence belongs to the XseB family. As to quaternary structure, heterooligomer composed of large and small subunits.

The protein resides in the cytoplasm. It carries out the reaction Exonucleolytic cleavage in either 5'- to 3'- or 3'- to 5'-direction to yield nucleoside 5'-phosphates.. Functionally, bidirectionally degrades single-stranded DNA into large acid-insoluble oligonucleotides, which are then degraded further into small acid-soluble oligonucleotides. The chain is Exodeoxyribonuclease 7 small subunit from Photobacterium profundum (strain SS9).